Consider the following 611-residue polypeptide: Probable potassium transport system protein Kup (611 aa).

13 consecutive transmembrane segments (helical) span residues 24 to 44, 55 to 75, 102 to 122, 143 to 163, 175 to 195, 218 to 238, 252 to 272, 275 to 295, 296 to 316, 344 to 364, 374 to 394, 400 to 420, and 423 to 443; these read LVFG…FLFL, VSLI…FLAM, VAVF…ECVI, LIAQ…LFLF, FGPV…ISVA, LLGF…EALF, AWGF…AYLL, TDVI…LYIP, FLLL…SGIF, IYIN…LLIF, YGLA…AIFL, LYMG…LSTV, and ITHG…IVII.

This sequence belongs to the HAK/KUP transporter (TC 2.A.72) family.

The protein resides in the cell membrane. The catalysed reaction is K(+)(in) + H(+)(in) = K(+)(out) + H(+)(out). Transport of potassium into the cell. Likely operates as a K(+):H(+) symporter. This is Probable potassium transport system protein Kup from Methanospirillum hungatei JF-1 (strain ATCC 27890 / DSM 864 / NBRC 100397 / JF-1).